We begin with the raw amino-acid sequence, 307 residues long: Aquaporin Lacbi1:387054 (307 aa).

Residues 1 to 40 are Cytoplasmic-facing; the sequence is MSNAPLVHLSDLQKRLRVFAVWEKVRNDGKVHWAIECFAE. A helical membrane pass occupies residues 41–61; the sequence is MFGVFLYVYFGLGSTAGWVIG. Over 62–68 the chain is Extracellular; sequence NIIKETN. A helical membrane pass occupies residues 69 to 89; that stretch reads LSSILQIGLAYAFGIWFAIGL. Residues 90–120 are Cytoplasmic-facing; sequence CSSSSGGHFNPCVTLSFVVFKGFPKLKACRY. The short motif at 99 to 101 is the NPA 1 element; that stretch reads NPC. Residues 121–141 form a helical membrane-spanning segment; it reads IIAQILGAYIASALVYSQWNV. The Extracellular segment spans residues 142–157; sequence LIEECTLGLIKAKAYD. Residues 158–178 traverse the membrane as a helical segment; it reads TTMFTPNGPAGIFALYLVPGA. An NPA 2 motif is present at residues 167-169; sequence AGI. Residues 179–183 lie on the Cytoplasmic side of the membrane; it reads QSVPR. A helical membrane pass occupies residues 184–203; it reads ALLNEFVNSTLIGMIIWAAL. Topologically, residues 204-216 are extracellular; that stretch reads DPTNMMVPPAMGP. A helical membrane pass occupies residues 217-237; it reads LFISLAYAAVIWGFATPAVAL. Residues 238-264 are Cytoplasmic-facing; it reads NTARDLGARLFAMSIWGTKAAGSGYSA. The helical transmembrane segment at 265–285 threads the bilayer; sequence IACLINIPATLLGVFLYEVFF. Topologically, residues 286 to 307 are extracellular; the sequence is TDSDRGKLLPILNGKKLKHIFS.

The protein belongs to the MIP/aquaporin (TC 1.A.8) family.

The protein resides in the membrane. The enzyme catalyses H2O(in) = H2O(out). It carries out the reaction NH4(+)(in) = NH4(+)(out). The catalysed reaction is urea(in) = urea(out). It catalyses the reaction glycerol(in) = glycerol(out). Functionally, water channel required to facilitate the transport of water across membranes. In addition to water, also shows strong ammonium transport activity. Also enables low but statistically significant glycerol and urea permeability. May be involved in fungal nitrogen (ammonium) support of the plant host in symbiosis. This chain is Aquaporin Lacbi1:387054, found in Laccaria bicolor (strain S238N-H82 / ATCC MYA-4686) (Bicoloured deceiver).